The chain runs to 1194 residues: Chitin synthase C (1194 aa).

Disordered regions lie at residues 1-91 and 136-177; these read MSLP…PNYL and GAHG…RRKA. Residues 12-23 show a composition bias toward basic and acidic residues; the sequence is PRREETSAFREP. The segment covering 42 to 54 has biased composition (basic residues); it reads PRHHRHHRSHSSR. Basic and acidic residues-rich tracts occupy residues 55–69 and 76–85; these read HQHD…EGGI and VKPERGRMDP. Residues 150-164 show a composition bias toward basic residues; sequence TRHRSKKRKGSRKIS. Residues 221–241 traverse the membrane as a helical segment; the sequence is IGLISIILMIAAFVGFLTFGF. N-linked (GlcNAc...) asparagine glycans are attached at residues N351 and N390. Residues 476 to 496 form a helical membrane-spanning segment; that stretch reads YVSLIFILSIVIVKFAFALLF. N-linked (GlcNAc...) asparagine glycans are attached at residues N582, N608, N885, and N1014. 3 helical membrane-spanning segments follow: residues 1039-1059, 1073-1093, and 1097-1117; these read FVIF…SFTI, IIPL…VVVT, and LVYV…NFVL.

Belongs to the chitin synthase family. Class V subfamily.

The protein resides in the cell membrane. It catalyses the reaction [(1-&gt;4)-N-acetyl-beta-D-glucosaminyl](n) + UDP-N-acetyl-alpha-D-glucosamine = [(1-&gt;4)-N-acetyl-beta-D-glucosaminyl](n+1) + UDP + H(+). Polymerizes chitin, a structural polymer of the cell wall and septum, by transferring the sugar moiety of UDP-GlcNAc to the non-reducing end of the growing chitin polymer. Responsible for synthesis of 30-40% of the chitin in the cells. ChsA and chsD play redundant functions in conidia formation. The chitin synthesized by the chsD-encoded isozyme contributes to the rigidity of the walls of germinating conidia, of the subapical region of hyphae, and of conidiophore vesicles, but is not necessary for normal morphology of these cells. This is Chitin synthase C from Emericella nidulans (strain FGSC A4 / ATCC 38163 / CBS 112.46 / NRRL 194 / M139) (Aspergillus nidulans).